A 525-amino-acid chain; its full sequence is Neuropilin and tolloid-like protein 2 (525 aa).

The N-terminal stretch at 1–22 is a signal peptide; it reads MALEQLCAVLKVLLITVLVVEG. Over 23-347 the chain is Extracellular; sequence IAVAQKTQDG…GLFEQITKTH (325 aa). Intrachain disulfides connect Cys-45–Cys-72, Cys-100–Cys-122, Cys-177–Cys-207, Cys-234–Cys-256, Cys-297–Cys-309, Cys-304–Cys-322, and Cys-316–Cys-331. 2 CUB domains span residues 45–159 and 177–292; these read CGIW…YSFI and CQFE…FTSF. The region spanning 296 to 332 is the LDL-receptor class A domain; that stretch reads PCTSSTFFCHSNMCINNSLVCNGVQNCAYPWDENHCK. A glycan (N-linked (GlcNAc...) asparagine) is linked at Asn-311. The chain crosses the membrane as a helical span at residues 348-368; it reads GTIIGITSGIVLVLLIISILV. Residues 369 to 525 lie on the Cytoplasmic side of the membrane; it reads QVKQPRKKVM…SAQASISIDF (157 aa). Ser-409 bears the Phosphoserine mark.

Interacts with GRIK2 and GRIK3, but neither with AMPA-nor with NMDA-sensitive glutamate receptors. Post-translationally, N-glycosylated. Expressed in brain tissues, including cerebellar granule cells (at protein level).

Its subcellular location is the cell membrane. Accessory subunit of neuronal kainate-sensitive glutamate receptors, GRIK2 and GRIK3. Increases kainate-receptor channel activity, slowing the decay kinetics of the receptors, without affecting their expression at the cell surface, and increasing the open probability of the receptor channels. Modulates the agonist sensitivity of kainate receptors. Slows the decay of kainate receptor-mediated excitatory postsynaptic currents (EPSCs), thus directly influencing synaptic transmission. The chain is Neuropilin and tolloid-like protein 2 (Neto2) from Mus musculus (Mouse).